The sequence spans 227 residues: Cytochrome c oxidase subunit 2 (227 aa).

At 1-14 the chain is on the mitochondrial intermembrane side; it reads MAYPFQLGFQDATS. Residues 15 to 45 form a helical membrane-spanning segment; sequence PIMEELLHFHDHTLMIVFLISSLVLYVISAM. Topologically, residues 46–59 are mitochondrial matrix; it reads LTTNLTHTSTMDAQ. A helical membrane pass occupies residues 60–87; that stretch reads EVETIWTILPAIILITIALPSLRILYMM. Over 88 to 227 the chain is Mitochondrial intermembrane; that stretch reads DEINNPAMTI…YFEKWSVSML (140 aa). The Cu cation site is built by His-161, Cys-196, Glu-198, Cys-200, His-204, and Met-207. Mg(2+) is bound at residue Glu-198. Position 218 is a phosphotyrosine (Tyr-218).

This sequence belongs to the cytochrome c oxidase subunit 2 family. In terms of assembly, component of the cytochrome c oxidase (complex IV, CIV), a multisubunit enzyme composed of 14 subunits. The complex is composed of a catalytic core of 3 subunits MT-CO1, MT-CO2 and MT-CO3, encoded in the mitochondrial DNA, and 11 supernumerary subunits COX4I, COX5A, COX5B, COX6A, COX6B, COX6C, COX7A, COX7B, COX7C, COX8 and NDUFA4, which are encoded in the nuclear genome. The complex exists as a monomer or a dimer and forms supercomplexes (SCs) in the inner mitochondrial membrane with NADH-ubiquinone oxidoreductase (complex I, CI) and ubiquinol-cytochrome c oxidoreductase (cytochrome b-c1 complex, complex III, CIII), resulting in different assemblies (supercomplex SCI(1)III(2)IV(1) and megacomplex MCI(2)III(2)IV(2)). Found in a complex with TMEM177, COA6, COX18, COX20, SCO1 and SCO2. Interacts with TMEM177 in a COX20-dependent manner. Interacts with COX20. Interacts with COX16. Cu cation serves as cofactor.

The protein resides in the mitochondrion inner membrane. It catalyses the reaction 4 Fe(II)-[cytochrome c] + O2 + 8 H(+)(in) = 4 Fe(III)-[cytochrome c] + 2 H2O + 4 H(+)(out). Functionally, component of the cytochrome c oxidase, the last enzyme in the mitochondrial electron transport chain which drives oxidative phosphorylation. The respiratory chain contains 3 multisubunit complexes succinate dehydrogenase (complex II, CII), ubiquinol-cytochrome c oxidoreductase (cytochrome b-c1 complex, complex III, CIII) and cytochrome c oxidase (complex IV, CIV), that cooperate to transfer electrons derived from NADH and succinate to molecular oxygen, creating an electrochemical gradient over the inner membrane that drives transmembrane transport and the ATP synthase. Cytochrome c oxidase is the component of the respiratory chain that catalyzes the reduction of oxygen to water. Electrons originating from reduced cytochrome c in the intermembrane space (IMS) are transferred via the dinuclear copper A center (CU(A)) of subunit 2 and heme A of subunit 1 to the active site in subunit 1, a binuclear center (BNC) formed by heme A3 and copper B (CU(B)). The BNC reduces molecular oxygen to 2 water molecules using 4 electrons from cytochrome c in the IMS and 4 protons from the mitochondrial matrix. The sequence is that of Cytochrome c oxidase subunit 2 (MT-CO2) from Macrotus californicus (Californian leaf-nosed bat).